We begin with the raw amino-acid sequence, 332 residues long: MHTLIRSFLGLWYVLGALAQTEIKLVADENVTLPCRHSLGHLGIQSLDIEWLSNISDHGKQVLLSYSGGQVYNAENHKGRYSFVSKYLEGDASLFIRSLQPSDAGQYICKVKNAGQYQWSFITVIVLVKPSELACSSEGAQLEGKNVTLNCKSTAGTKPLNYRWVRVNLKDNVERPVQSTARIGPENQLLLHNLSKTDNGSYRCEVSNEVGKRTCDVDVTVQSVSNTGILAGVACGVVVGVFLIFFTVWLLFHKKEFKKREEEEFFNEIREDAEAPKARLVKPGSSSSDSRSSQSGSSSTRSTTNSASRSQRTHSTQETPHGEQRHHCLEKI.

The N-terminal stretch at 1 to 19 (MHTLIRSFLGLWYVLGALA) is a signal peptide. 2 Ig-like C2-type domains span residues 20–123 (QTEI…SFIT) and 130–220 (PSEL…VDVT). Residues 20–231 (QTEIKLVADE…QSVSNTGILA (212 aa)) lie on the Extracellular side of the membrane. Disulfide bonds link Cys35–Cys109 and Cys151–Cys204. N-linked (GlcNAc...) asparagine glycosylation is present at Asn193. Residues 232–252 (GVACGVVVGVFLIFFTVWLLF) form a helical membrane-spanning segment. Topologically, residues 253–332 (HKKEFKKREE…EQRHHCLEKI (80 aa)) are cytoplasmic. Positions 276–332 (PKARLVKPGSSSSDSRSSQSGSSSTRSTTNSASRSQRTHSTQETPHGEQRHHCLEKI) are disordered. Residues 285–310 (SSSSDSRSSQSGSSSTRSTTNSASRS) show a composition bias toward low complexity. The span at 320 to 332 (PHGEQRHHCLEKI) shows a compositional bias: basic and acidic residues.

Its subcellular location is the cell junction. The protein localises to the tight junction. The protein resides in the cell membrane. In Xenopus tropicalis (Western clawed frog), this protein is CXADR-like membrane protein (clmp).